The following is a 195-amino-acid chain: Sec-independent protein translocase protein TatB (195 aa).

The helical transmembrane segment at 1-21 threads the bilayer; the sequence is MFDIGFSELVLIFIVGLVVLG. Positions 166-195 are disordered; sequence DESQFAAYYPPDDDLASPTPSQPQDKQNVS. The span at 183 to 195 shows a compositional bias: polar residues; sequence PTPSQPQDKQNVS.

It belongs to the TatB family. As to quaternary structure, the Tat system comprises two distinct complexes: a TatABC complex, containing multiple copies of TatA, TatB and TatC subunits, and a separate TatA complex, containing only TatA subunits. Substrates initially bind to the TatABC complex, which probably triggers association of the separate TatA complex to form the active translocon.

It is found in the cell inner membrane. Functionally, part of the twin-arginine translocation (Tat) system that transports large folded proteins containing a characteristic twin-arginine motif in their signal peptide across membranes. Together with TatC, TatB is part of a receptor directly interacting with Tat signal peptides. TatB may form an oligomeric binding site that transiently accommodates folded Tat precursor proteins before their translocation. The sequence is that of Sec-independent protein translocase protein TatB from Actinobacillus pleuropneumoniae serotype 5b (strain L20).